Consider the following 163-residue polypeptide: uncharacterized protein (163 aa).

Residues Asp-23–Gln-113 are disordered. The residue at position 102 (Ser-102) is a Phosphoserine.

This is an uncharacterized protein from Mus musculus (Mouse).